Consider the following 661-residue polypeptide: Ubiquitin carboxyl-terminal hydrolase 25 (661 aa).

The region spanning 24–335 (LGLRNLGNTC…KAYILFFSRS (312 aa)) is the USP domain. Cys33 serves as the catalytic Nucleophile. The active-site Proton acceptor is the His294. Disordered regions lie at residues 387–406 (GNLA…RAEQ) and 449–558 (FHQD…LCSS). Over residues 449-461 (FHQDENIAPKANK) the composition is skewed to basic and acidic residues. 2 stretches are compositionally biased toward polar residues: residues 462–475 (ENSV…VNSG) and 545–558 (NGVS…LCSS).

It belongs to the peptidase C19 family.

It carries out the reaction Thiol-dependent hydrolysis of ester, thioester, amide, peptide and isopeptide bonds formed by the C-terminal Gly of ubiquitin (a 76-residue protein attached to proteins as an intracellular targeting signal).. Recognizes and hydrolyzes the peptide bond at the C-terminal Gly of ubiquitin. Involved in the processing of poly-ubiquitin precursors as well as that of ubiquitinated proteins. In Arabidopsis thaliana (Mouse-ear cress), this protein is Ubiquitin carboxyl-terminal hydrolase 25 (UBP25).